The following is a 273-amino-acid chain: Transposable element Tcb2 transposase (273 aa).

This sequence belongs to the transposase 5 family.

The protein resides in the nucleus. Its function is as follows. Probably essential for transposable element Tcb2 transposition. The protein is Transposable element Tcb2 transposase of Caenorhabditis briggsae.